The chain runs to 104 residues: Large ribosomal subunit protein uL24 (104 aa).

Belongs to the universal ribosomal protein uL24 family. Part of the 50S ribosomal subunit.

One of two assembly initiator proteins, it binds directly to the 5'-end of the 23S rRNA, where it nucleates assembly of the 50S subunit. Its function is as follows. One of the proteins that surrounds the polypeptide exit tunnel on the outside of the subunit. The chain is Large ribosomal subunit protein uL24 from Nitrobacter hamburgensis (strain DSM 10229 / NCIMB 13809 / X14).